The sequence spans 168 residues: Thiol peroxidase (168 aa).

The Thioredoxin domain occupies 19 to 168 (PQAGSKAQTF…YEAALAVLKA (150 aa)). Cys61 functions as the Cysteine sulfenic acid (-SOH) intermediate in the catalytic mechanism. A disulfide bridge connects residues Cys61 and Cys95.

This sequence belongs to the peroxiredoxin family. Tpx subfamily. In terms of assembly, homodimer.

It carries out the reaction a hydroperoxide + [thioredoxin]-dithiol = an alcohol + [thioredoxin]-disulfide + H2O. Thiol-specific peroxidase that catalyzes the reduction of hydrogen peroxide and organic hydroperoxides to water and alcohols, respectively. Plays a role in cell protection against oxidative stress by detoxifying peroxides. The protein is Thiol peroxidase of Shigella dysenteriae.